The following is a 129-amino-acid chain: Peptidyl-prolyl cis-trans isomerase pin4 (129 aa).

A disordered region spans residues 1–34 (MAPKNNAKGGDKKGKGKDASEGDKGKGGGKGLKP). Over residues 9–26 (GGDKKGKGKDASEGDKGK) the composition is skewed to basic and acidic residues. Residues 35-127 (ATSINVRHIL…FGYHIIMVEG (93 aa)) enclose the PpiC domain.

The protein belongs to the PpiC/parvulin rotamase family. PIN4 subfamily.

The catalysed reaction is [protein]-peptidylproline (omega=180) = [protein]-peptidylproline (omega=0). Functionally, PPIases accelerate the folding of proteins. It catalyzes the cis-trans isomerization of proline imidic peptide bonds in oligopeptides. The polypeptide is Peptidyl-prolyl cis-trans isomerase pin4 (pin4) (Aspergillus fumigatus (strain ATCC MYA-4609 / CBS 101355 / FGSC A1100 / Af293) (Neosartorya fumigata)).